The chain runs to 62 residues: Prokaryotic ubiquitin-like protein Pup (62 aa).

Residues 1 to 29 (MSQQSLNAPGPGAEDGNDPEAVTGGQTFA) form a disordered region. The tract at residues 21-56 (AVTGGQTFASAQAADDLLDEIDSVLESNAETFVRSF) is ARC ATPase binding. Gln-62 is modified (deamidated glutamine). An Isoglutamyl lysine isopeptide (Gln-Lys) (interchain with K-? in acceptor proteins) cross-link involves residue Gln-62.

The protein belongs to the prokaryotic ubiquitin-like protein family. In terms of assembly, strongly interacts with the proteasome-associated ATPase ARC through a hydrophobic interface; the interacting region of Pup lies in its C-terminal half. There is one Pup binding site per ARC hexamer ring. In terms of processing, is modified by deamidation of its C-terminal glutamine to glutamate by the deamidase Dop, a prerequisite to the subsequent pupylation process.

The protein operates within protein degradation; proteasomal Pup-dependent pathway. Functionally, protein modifier that is covalently attached to lysine residues of substrate proteins, thereby targeting them for proteasomal degradation. The tagging system is termed pupylation. The polypeptide is Prokaryotic ubiquitin-like protein Pup (Brachybacterium faecium (strain ATCC 43885 / DSM 4810 / JCM 11609 / LMG 19847 / NBRC 14762 / NCIMB 9860 / 6-10)).